The following is a 399-amino-acid chain: Flavohemoprotein (399 aa).

The 138-residue stretch at 1–138 folds into the Globin domain; sequence MLAEKTRSII…IADIFITVEK (138 aa). Residue Thr-22 is modified to Phosphothreonine. Position 85 (His-85) interacts with heme b. Catalysis depends on charge relay system residues Tyr-95 and Glu-137. A reductase region spans residues 146–399; it reads WPGWKPFDIT…FGPKMSTVQV (254 aa). An FAD-binding FR-type domain is found at 147–264; it reads PGWKPFDITA…SAPAGDFAIN (118 aa). FAD-binding positions include Tyr-189 and 207 to 210; that span reads RHYS. NADP(+) is bound at residue 281–286; it reads GVGVTP. 389 to 392 contributes to the FAD binding site; the sequence is PFGP.

Belongs to the globin family. Two-domain flavohemoproteins subfamily. It in the C-terminal section; belongs to the flavoprotein pyridine nucleotide cytochrome reductase family. Requires FAD as cofactor. Heme b serves as cofactor.

It is found in the cytoplasm. The enzyme catalyses 2 nitric oxide + NADPH + 2 O2 = 2 nitrate + NADP(+) + H(+). It carries out the reaction 2 nitric oxide + NADH + 2 O2 = 2 nitrate + NAD(+) + H(+). Is involved in NO detoxification in an aerobic process, termed nitric oxide dioxygenase (NOD) reaction that utilizes O(2) and NAD(P)H to convert NO to nitrate, which protects the fungus from various noxious nitrogen compounds. Therefore, plays a central role in the inducible response to nitrosative stress. In terms of biological role, in the presence of oxygen and NADH, it has NADH oxidase activity, which leads to the generation of superoxide and H(2)O(2). Under anaerobic conditions, it also exhibits nitric oxide reductase and FAD reductase activities. However, all these reactions are much lower than NOD activity. The polypeptide is Flavohemoprotein (YHB1) (Saccharomyces cerevisiae (strain ATCC 204508 / S288c) (Baker's yeast)).